Consider the following 615-residue polypeptide: Ectoine/glycine betaine/proline transporter EctP (615 aa).

12 helical membrane passes run 24–44 (FIFS…IALG), 62–82 (LGWM…GIFA), 102–122 (IVWF…FWGV), 156–176 (FGIH…YFIY), 207–227 (LAIV…VLQI), 240–260 (VSWV…ISVA), 275–295 (IAMA…LTLL), 329–349 (WTVF…MFVA), 360–380 (FIGG…SIFG), 417–437 (LTGI…ITSI), 463–483 (WACT…SSGI), and 489–509 (VVII…FSLL). Disordered regions lie at residues 524 to 562 (TRQW…LEHD) and 589 to 615 (PEEA…EYDI). Basic and acidic residues-rich tracts occupy residues 526 to 540 (QWEK…EEHS) and 600 to 615 (KIVE…EYDI).

Belongs to the BCCT transporter (TC 2.A.15) family.

Its subcellular location is the cell membrane. Its function is as follows. Involved in the uptake of osmoprotectants. Can transport ectoine, proline and glycine betaine. Na(+) is probably the coupling ion. In Corynebacterium glutamicum (strain ATCC 13032 / DSM 20300 / JCM 1318 / BCRC 11384 / CCUG 27702 / LMG 3730 / NBRC 12168 / NCIMB 10025 / NRRL B-2784 / 534), this protein is Ectoine/glycine betaine/proline transporter EctP.